A 332-amino-acid polypeptide reads, in one-letter code: Transcription initiation factor IIB 2 (332 aa).

Over residues 1 to 10 the composition is skewed to polar residues; that stretch reads MSDTITTRTY. The disordered stretch occupies residues 1–36; it reads MSDTITTRTYSADAKSRDVRPRESERDETQQDETQV. A compositionally biased stretch (basic and acidic residues) spans 14–29; it reads AKSRDVRPRESERDET. The TFIIB-type zinc finger occupies 33-63; the sequence is ETQVCPECSGHLVTDEEHGETICEDCGLVVE. Zn(2+) is bound by residues C37, C40, C55, and C58. The interval 77 to 106 is disordered; that stretch reads DSAERDSKSRVGAPTTKMMHDKGLSTNIGW. 2 consecutive repeat copies span residues 149-232 and 243-324.

Belongs to the TFIIB family.

Functionally, stabilizes TBP binding to an archaeal box-A promoter. Also responsible for recruiting RNA polymerase II to the pre-initiation complex (DNA-TBP-TFIIB). The protein is Transcription initiation factor IIB 2 of Haloferax volcanii (strain ATCC 29605 / DSM 3757 / JCM 8879 / NBRC 14742 / NCIMB 2012 / VKM B-1768 / DS2) (Halobacterium volcanii).